Reading from the N-terminus, the 259-residue chain is 5'-nucleotidase SurE (259 aa).

A divalent metal cation is bound by residues Asp13, Asp14, Ser44, and Asn101.

This sequence belongs to the SurE nucleotidase family. The cofactor is a divalent metal cation.

The protein resides in the cytoplasm. The catalysed reaction is a ribonucleoside 5'-phosphate + H2O = a ribonucleoside + phosphate. Functionally, nucleotidase that shows phosphatase activity on nucleoside 5'-monophosphates. The polypeptide is 5'-nucleotidase SurE (Flavobacterium johnsoniae (strain ATCC 17061 / DSM 2064 / JCM 8514 / BCRC 14874 / CCUG 350202 / NBRC 14942 / NCIMB 11054 / UW101) (Cytophaga johnsonae)).